The primary structure comprises 446 residues: Neuropeptide Y receptor type 5 (446 aa).

The Extracellular segment spans residues 1-42 (MGSEIPDYYNKTLASENNTVATRNSGFPVWEDYKGSVDDLQY). Asn-10 and Asn-17 each carry an N-linked (GlcNAc...) asparagine glycan. Residues 43–63 (FLIGLYTFVSLLGFMGNLLIL) form a helical membrane-spanning segment. At 64 to 77 (MAVMRKRNQKTTVN) the chain is on the cytoplasmic side. Residues 78-98 (FLIGNLAFSDILVVLFCSPFT) traverse the membrane as a helical segment. Over 99 to 117 (LTSVLLDQWMFGKVMCHIM) the chain is Extracellular. Cys-114 and Cys-198 are joined by a disulfide. A helical membrane pass occupies residues 118-138 (PFLQCVTVLVSTLILISIAIV). Over 139-156 (RYHMIKHPVSNNLTANHG) the chain is Cytoplasmic. Residues 157-177 (YFLIATVWTLGLAICSPLPVF) traverse the membrane as a helical segment. Topologically, residues 178-208 (HSLVELQESFGSAWLSSRYLCVESWPSDSYR) are extracellular. A helical transmembrane segment spans residues 209-229 (IAFTISLLLVQYILPLVCLTV). Over 230 to 369 (SHTSVCRTIS…RKRSRSVFYR (140 aa)) the chain is Cytoplasmic. Residues 297 to 325 (RPAPAGPALESREGRPPGKVGSMQSQPPP) form a disordered region. A helical membrane pass occupies residues 370 to 390 (LTVLILVFAVSWMPLHLFHVV). Residues 391–407 (TDFNDNLISNRHFKLVY) are Extracellular-facing. A helical membrane pass occupies residues 408–428 (CICHLLGMMSCCLNPILYGFL). Topologically, residues 429–446 (NNGIKADLMSLIHCLHVS) are cytoplasmic. A lipid anchor (S-palmitoyl cysteine) is attached at Cys-442.

It belongs to the G-protein coupled receptor 1 family.

It is found in the cell membrane. Receptor for neuropeptide Y and peptide YY. The activity of this receptor is mediated by G proteins that inhibit adenylate cyclase activity. Seems to be associated with food intake. Could be involved in feeding disorders. The polypeptide is Neuropeptide Y receptor type 5 (NPY5R) (Sus scrofa (Pig)).